The following is a 556-amino-acid chain: MDAHGVLQFLLFLALVLALTPILGRFMTWLFQAPVGRVEDGFYRLLGIDPTREQGWAAYAVSLLIFHLLAVFGLYALQRFQGMLPLNPAGQGAVPPDLAFNTAISFATNTNWQNYGGESTMSHLTQMAGLTVHNFLSAAAGIAVAVALMRGFARHSTRTVGNFYVDITRVTLGLLLPLCLVGALVLVGQGVPQNFDAPVTVTTLEGVSQVIAQGPVASQMMIKHLGTNGGGFFNANAAHPYENPNALVNLIHMLAIFAIGAALTNTFGRMAGDRRQGWALLGAMAALFLAGLGAAWWAEAQGNPVLGGIANMEGKEVRLGVAASMLFAVVTTVTSCGAVNAMHDSLLPLAGMIPMVNMLLGEVVVGGVGSGLYGMVVFALLTVFIAGLMVGRTPEYLGKKIEAREIKLAVIAILATPVAVLGIGGLAITLPMGQAGIAAAGPHGLSEVLYAFASAGNNNGSAFGGLSGNTIFYNATMAAAMMIGRFVVMIPVLAIAGALAAKMAVPASAGTFPTHGWLFVVLLVGIVLVVGGLTYFPVLVLGPVVEHLALSAGILF.

The next 12 membrane-spanning stretches (helical) occupy residues 3–23 (AHGV…TPIL), 57–77 (AAYA…LYAL), 129–149 (GLTV…VALM), 172–192 (LGLL…QGVP), 247–267 (LVNL…TNTF), 278–298 (WALL…AWWA), 319–339 (LGVA…CGAV), 346–366 (LLPL…VVVG), 371–391 (GLYG…LMVG), 408–428 (LAVI…GLAI), 486–506 (FVVM…MAVP), and 516–536 (GWLF…LTYF).

Belongs to the KdpA family. The system is composed of three essential subunits: KdpA, KdpB and KdpC.

It localises to the cell inner membrane. Functionally, part of the high-affinity ATP-driven potassium transport (or Kdp) system, which catalyzes the hydrolysis of ATP coupled with the electrogenic transport of potassium into the cytoplasm. This subunit binds the periplasmic potassium ions and delivers the ions to the membrane domain of KdpB through an intramembrane tunnel. The sequence is that of Potassium-transporting ATPase potassium-binding subunit from Paramagnetospirillum magneticum (strain ATCC 700264 / AMB-1) (Magnetospirillum magneticum).